A 463-amino-acid chain; its full sequence is Argininosuccinate lyase (463 aa).

It belongs to the lyase 1 family. Argininosuccinate lyase subfamily.

It is found in the cytoplasm. The enzyme catalyses 2-(N(omega)-L-arginino)succinate = fumarate + L-arginine. It participates in amino-acid biosynthesis; L-arginine biosynthesis; L-arginine from L-ornithine and carbamoyl phosphate: step 3/3. The chain is Argininosuccinate lyase from Methylorubrum populi (strain ATCC BAA-705 / NCIMB 13946 / BJ001) (Methylobacterium populi).